Consider the following 244-residue polypeptide: 1-(5-phosphoribosyl)-5-[(5-phosphoribosylamino)methylideneamino] imidazole-4-carboxamide isomerase (244 aa).

Aspartate 8 acts as the Proton acceptor in catalysis. The active-site Proton donor is aspartate 129.

The protein belongs to the HisA/HisF family.

It localises to the cytoplasm. The enzyme catalyses 1-(5-phospho-beta-D-ribosyl)-5-[(5-phospho-beta-D-ribosylamino)methylideneamino]imidazole-4-carboxamide = 5-[(5-phospho-1-deoxy-D-ribulos-1-ylimino)methylamino]-1-(5-phospho-beta-D-ribosyl)imidazole-4-carboxamide. It functions in the pathway amino-acid biosynthesis; L-histidine biosynthesis; L-histidine from 5-phospho-alpha-D-ribose 1-diphosphate: step 4/9. This Geobacter sulfurreducens (strain ATCC 51573 / DSM 12127 / PCA) protein is 1-(5-phosphoribosyl)-5-[(5-phosphoribosylamino)methylideneamino] imidazole-4-carboxamide isomerase.